The primary structure comprises 400 residues: Formate-dependent phosphoribosylglycinamide formyltransferase (400 aa).

Residues 22–23 (EL) and E82 each bind N(1)-(5-phospho-beta-D-ribosyl)glycinamide. ATP-binding positions include R115, K156, 161 to 166 (SSGKGQ), 196 to 199 (EGFI), and E204. The 190-residue stretch at 120 to 309 (RLAAETLGLP…EFALHARAIL (190 aa)) folds into the ATP-grasp domain. Residues E268 and E280 each coordinate Mg(2+). N(1)-(5-phospho-beta-D-ribosyl)glycinamide is bound by residues D287, K361, and 368 to 369 (RR).

It belongs to the PurK/PurT family. In terms of assembly, homodimer.

It catalyses the reaction N(1)-(5-phospho-beta-D-ribosyl)glycinamide + formate + ATP = N(2)-formyl-N(1)-(5-phospho-beta-D-ribosyl)glycinamide + ADP + phosphate + H(+). It functions in the pathway purine metabolism; IMP biosynthesis via de novo pathway; N(2)-formyl-N(1)-(5-phospho-D-ribosyl)glycinamide from N(1)-(5-phospho-D-ribosyl)glycinamide (formate route): step 1/1. Functionally, involved in the de novo purine biosynthesis. Catalyzes the transfer of formate to 5-phospho-ribosyl-glycinamide (GAR), producing 5-phospho-ribosyl-N-formylglycinamide (FGAR). Formate is provided by PurU via hydrolysis of 10-formyl-tetrahydrofolate. This Xanthomonas oryzae pv. oryzae (strain KACC10331 / KXO85) protein is Formate-dependent phosphoribosylglycinamide formyltransferase.